Consider the following 239-residue polypeptide: MQDPNADTEWNDILRKKGILPPKESLKELEEEAEEEQRILQQSVVKTYEDMTLEELEDHEDEFNEEDERAIEMYRRRRLAEWKATKLKNKFGEVLEISGKDYVQEVTKAGEGLWVILHLYKQGIPLCALINQHLSGLARKFPDVKFIKAISTTCIPNYPDRNLPTIFVYLEGDIKAQFIGPLVFGGMNLTRDELEWKLSESGAIMTDLEENPKKPIEDVLLSSVRRSVLMKRDSDSEGD.

Methionine 1 carries the post-translational modification N-acetylmethionine. One can recognise a Phosducin domain in the interval 32–180 (EAEEEQRILQ…EGDIKAQFIG (149 aa)). The residue at position 43 (serine 43) is a Phosphoserine. The tract at residues 91-239 (FGEVLEISGK…MKRDSDSEGD (149 aa)) is thioredoxin fold. 2 interaction with XIAP regions span residues 97 to 99 (ISG) and 153 to 155 (TCI). A phosphoserine mark is found at serine 234 and serine 236.

The protein belongs to the phosducin family. Interacts (via thioredoxin fold region) with KDR/VEGFR2 (via juxtamembrane domain). Forms ternary complexes with the chaperonin CCT complex and actin substrate, leading to inhibition of actin folding. Interacts with XIAP (via BIR 3 and RING domain). Interacts with HSP90AA1 and HSP90AB1. N-terminal methionine acetylation destabilizes the protein. Expressed in endothelial cells (at protein level). Expressed in all tissues examined including spleen, thymus, prostate, testis, ovary, small intestine and colon.

The protein localises to the cytoplasm. Its subcellular location is the perinuclear region. It localises to the endoplasmic reticulum. In terms of biological role, acts as a chaperone for the angiogenic VEGF receptor KDR/VEGFR2, increasing its abundance by inhibiting its ubiquitination and degradation. Inhibits the folding activity of the chaperonin-containing T-complex (CCT) which leads to inhibition of cytoskeletal actin folding. Acts as a chaperone during heat shock alongside HSP90 and HSP40/70 chaperone complexes. Modulates the activation of caspases during apoptosis. The sequence is that of Phosducin-like protein 3 (PDCL3) from Homo sapiens (Human).